The primary structure comprises 240 residues: MASEITYAEVRIKNESNSSVTYSGSPAAPREKPTRHLSKPGSLLVPFTSLMVLLLLLAITFLVAFIIYFQKYSQFLEEKKAIKGITHKELNCIKNVLLMEEKSWSCCPKNWKPFGSHCYWVTKHTSTYSKASWSESEKNCFSMGAHLLVIHSKEEQDFITGILNRDAAYFIGLWDSGHRQWQWVSQTPYNASATFWHKGEPSSDDEKCVIINHLNSGWGWNDIPCSGKQQSVCQMKKIQL.

Residues 1-48 (MASEITYAEVRIKNESNSSVTYSGSPAAPREKPTRHLSKPGSLLVPFT) lie on the Cytoplasmic side of the membrane. The ITIM motif signature appears at 5–10 (ITYAEV). The interval 18-38 (SSVTYSGSPAAPREKPTRHLS) is disordered. Residues 49–69 (SLMVLLLLLAITFLVAFIIYF) traverse the membrane as a helical; Signal-anchor for type II membrane protein segment. Over 70–240 (QKYSQFLEEK…SVCQMKKIQL (171 aa)) the chain is Extracellular. 3 disulfide bridges follow: cysteine 107-cysteine 118, cysteine 140-cysteine 233, and cysteine 208-cysteine 225. Residues 129-235 (SKASWSESEK…SGKQQSVCQM (107 aa)) enclose the C-type lectin domain. Valine 149 and glutamate 155 together coordinate Ca(2+). Asparagine 190 is a glycosylation site (N-linked (GlcNAc...) asparagine). Ca(2+) contacts are provided by glutamate 200, serine 202, and glutamate 206. Alpha-D-mannopyranose contacts are provided by residues 200-202 (EPS) and glutamate 206. 211 to 213 (INH) lines the N-acetyl-D-glucosamine pocket. Ca(2+) is bound by residues asparagine 221 and aspartate 222.

As to quaternary structure, may interact with PTPN6 via its ITIM site. In terms of tissue distribution, expressed by myeloid cells (dendritic cells, macrophages, and neutrophils) and B-cells.

Its subcellular location is the cell membrane. Functionally, C-type lectin receptor that binds carbohydrates mannose and fucose but also weakly interacts with N-acetylglucosamine (GlcNAc) in a Ca(2+)-dependent manner. Involved in regulating immune reactivity. Once triggered by antigen, it is internalized by clathrin-dependent endocytosis and delivers its antigenic cargo into the antigen presentation pathway resulting in cross-priming of CD8(+) T cells. This cross-presentation and cross-priming are enhanced by TLR7 and TLR8 agonists with increased expansion of the CD8(+) T cells, high production of IFNG and TNF with reduced levels of IL4, IL5 and IL13. In plasmacytoid dendritic cells, inhibits TLR9-mediated IFNA and TNF production. May be involved via its ITIM motif (immunoreceptor tyrosine-based inhibitory motifs) in the inhibition of B-cell-receptor-mediated calcium mobilization and protein tyrosine phosphorylation. This chain is C-type lectin domain family 4 member A (Clec4a), found in Rattus norvegicus (Rat).